The chain runs to 113 residues: Hydrogenase maturation factor HybF (113 aa).

Ni(2+) contacts are provided by H2 and E3. The Zn(2+) site is built by C73, C76, C89, and C92.

Belongs to the HypA/HybF family. HybF subfamily.

Its function is as follows. Involved in the maturation of [NiFe] hydrogenases. Required for nickel insertion into the metal center of the hydrogenase. This is Hydrogenase maturation factor HybF from Klebsiella pneumoniae.